We begin with the raw amino-acid sequence, 224 residues long: Ribonuclease HII (224 aa).

One can recognise an RNase H type-2 domain in the interval 1–210 (MKIGGIDEAG…VRKIEESIKA (210 aa)). 3 residues coordinate a divalent metal cation: Asp7, Glu8, and Asp105.

It belongs to the RNase HII family. It depends on Mn(2+) as a cofactor. The cofactor is Mg(2+).

It localises to the cytoplasm. It carries out the reaction Endonucleolytic cleavage to 5'-phosphomonoester.. Functionally, endonuclease that specifically degrades the RNA of RNA-DNA hybrids. The protein is Ribonuclease HII of Pyrococcus furiosus (strain ATCC 43587 / DSM 3638 / JCM 8422 / Vc1).